We begin with the raw amino-acid sequence, 354 residues long: Methylthioribose-1-phosphate isomerase (354 aa).

Residues 58 to 60 (RGA), Arg-101, and Gln-204 contribute to the substrate site. Residue Asp-245 is the Proton donor of the active site. 255–256 (NK) is a substrate binding site.

This sequence belongs to the eIF-2B alpha/beta/delta subunits family. MtnA subfamily.

It carries out the reaction 5-(methylsulfanyl)-alpha-D-ribose 1-phosphate = 5-(methylsulfanyl)-D-ribulose 1-phosphate. Its pathway is amino-acid biosynthesis; L-methionine biosynthesis via salvage pathway; L-methionine from S-methyl-5-thio-alpha-D-ribose 1-phosphate: step 1/6. Catalyzes the interconversion of methylthioribose-1-phosphate (MTR-1-P) into methylthioribulose-1-phosphate (MTRu-1-P). In Xanthomonas campestris pv. campestris (strain ATCC 33913 / DSM 3586 / NCPPB 528 / LMG 568 / P 25), this protein is Methylthioribose-1-phosphate isomerase.